The chain runs to 669 residues: DNA ligase (669 aa).

NAD(+) is bound by residues 33-37 (DVTYD), 82-83 (SL), and Glu115. Lys117 acts as the N6-AMP-lysine intermediate in catalysis. Residues Arg138, Glu172, Lys286, and Lys310 each coordinate NAD(+). Residues Cys401, Cys404, Cys417, and Cys422 each contribute to the Zn(2+) site. A BRCT domain is found at 589–669 (IDSSFLFGKK…DIKNLVNLDD (81 aa)).

The protein belongs to the NAD-dependent DNA ligase family. LigA subfamily. Mg(2+) serves as cofactor. The cofactor is Mn(2+).

The catalysed reaction is NAD(+) + (deoxyribonucleotide)n-3'-hydroxyl + 5'-phospho-(deoxyribonucleotide)m = (deoxyribonucleotide)n+m + AMP + beta-nicotinamide D-nucleotide.. In terms of biological role, DNA ligase that catalyzes the formation of phosphodiester linkages between 5'-phosphoryl and 3'-hydroxyl groups in double-stranded DNA using NAD as a coenzyme and as the energy source for the reaction. It is essential for DNA replication and repair of damaged DNA. The sequence is that of DNA ligase from Borrelia recurrentis (strain A1).